We begin with the raw amino-acid sequence, 132 residues long: Small ribosomal subunit protein uS8 (132 aa).

This sequence belongs to the universal ribosomal protein uS8 family. In terms of assembly, part of the 30S ribosomal subunit. Contacts proteins S5 and S12.

In terms of biological role, one of the primary rRNA binding proteins, it binds directly to 16S rRNA central domain where it helps coordinate assembly of the platform of the 30S subunit. This is Small ribosomal subunit protein uS8 from Nocardia farcinica (strain IFM 10152).